A 157-amino-acid chain; its full sequence is Transcriptional repressor NrdR (157 aa).

A zinc finger spans residues 3–34 (CPFCRHPDSRVIDSRTSDDGLSIRRRRQCPEC). Residues 46 to 136 (LSVIKRSGVV…VYQAFDSLED (91 aa)) form the ATP-cone domain.

It belongs to the NrdR family. The cofactor is Zn(2+).

Its function is as follows. Negatively regulates transcription of bacterial ribonucleotide reductase nrd genes and operons by binding to NrdR-boxes. This chain is Transcriptional repressor NrdR, found in Leifsonia xyli subsp. xyli (strain CTCB07).